We begin with the raw amino-acid sequence, 361 residues long: Probable sugar phosphate/phosphate translocator At1g12500 (361 aa).

Val-2 bears the N-acetylvaline mark. Helical transmembrane passes span 56–76 (TILTAAIIAAWFGSNIGVLLL), 90–110 (IFLTMTHMLSCAAYSSAVINI), 125–145 (FLKILSLSAIFCLSVVCGNTS), 153–173 (FNQAIGATTPFFTAVFSFLIT), 192–212 (IVLASNSEPSFHLFGFLICVA), 240–260 (LLLYMAPMAACILLPFTLYIE), 276–296 (LIIFLLAGNATVAYLVNLTNF), 306–326 (TLQVLGNGKAAVAAGVSVLIF), and 329–349 (PVTVMGIAGFGVTIMGVVLYS). Residues 89 to 196 (PIFLTMTHML…PVVSGIVLAS (108 aa)) form the EamA domain.

This sequence belongs to the TPT transporter family. TPT (TC 2.A.7.9) subfamily.

The protein resides in the membrane. This chain is Probable sugar phosphate/phosphate translocator At1g12500, found in Arabidopsis thaliana (Mouse-ear cress).